Reading from the N-terminus, the 99-residue chain is Protein AC150 (99 aa).

The 59-residue stretch at 38-96 (GFSCYNKPIGVNFPHPTRCDAFYMCVGLNQKLELICPEGFEFDPDVKNCVPISDYGCTA) folds into the Chitin-binding type-2 domain. The cysteines at positions 73 and 86 are disulfide-linked.

The protein resides in the host nucleus. The protein localises to the virion. Its function is as follows. Plays a role in primary oral infection of the host. This chain is Protein AC150, found in Autographa californica nuclear polyhedrosis virus (AcMNPV).